The following is a 194-amino-acid chain: Adenylate kinase (194 aa).

10-15 serves as a coordination point for ATP; it reads GAGKGT. Positions 30 to 59 are NMP; that stretch reads STGDMLRAAVAQQSEIGKRAKAVMDAGQLV. AMP contacts are provided by residues Thr31, Arg36, 57-59, 85-88, and Gln92; these read QLV and GYPR. The segment at 126–142 is LID; the sequence is SRVAETIAKGGQVRSDD. Arg127 lines the ATP pocket. Residues Arg139 and Arg150 each contribute to the AMP site. Ala178 provides a ligand contact to ATP.

This sequence belongs to the adenylate kinase family. In terms of assembly, monomer.

The protein localises to the cytoplasm. It catalyses the reaction AMP + ATP = 2 ADP. Its pathway is purine metabolism; AMP biosynthesis via salvage pathway; AMP from ADP: step 1/1. Its function is as follows. Catalyzes the reversible transfer of the terminal phosphate group between ATP and AMP. Plays an important role in cellular energy homeostasis and in adenine nucleotide metabolism. The sequence is that of Adenylate kinase from Brucella canis (strain ATCC 23365 / NCTC 10854 / RM-666).